The primary structure comprises 237 residues: Oligoribonuclease, mitochondrial (237 aa).

The N-terminal 25 residues, 1-25, are a transit peptide targeting the mitochondrion; it reads MLGVSLGARLLRGVGGRRGQFGARG. Residues 43–207 enclose the Exonuclease domain; that stretch reads MVWVDLEMTG…DDISESIKEL (165 aa). 2 residues coordinate Mg(2+): D47 and E49. S92 carries the post-translational modification Phosphoserine. Position 122 is a phosphotyrosine (Y122). Residue D147 coordinates Mg(2+). K173 carries the N6-acetyllysine modification. H194 is a catalytic residue. D199 is a binding site for Mg(2+).

It belongs to the oligoribonuclease family. In terms of assembly, homodimer. Homotetramer. Mn(2+) is required as a cofactor. It depends on Mg(2+) as a cofactor.

It is found in the mitochondrion intermembrane space. The protein localises to the mitochondrion matrix. It localises to the mitochondrion. The protein resides in the cytoplasm. Its subcellular location is the nucleus. Its function is as follows. 3'-to-5'exoribonuclease that preferentially degrades DNA and RNA oligonucleotides composed of only two nucleotides. Binds and degrades longer oligonucleotides with a lower affinity. Plays dual roles in mitochondria, scavenging nanoRNAs (small RNA oligonucleotides of &lt;5 nucleotides) that are produced by the degradosome and clearing short RNAs that are generated by RNA processing. Essential for correct initiation of mitochondrial transcription, degrading mitochondrial RNA dinucleotides to prevent RNA-primed transcription at non-canonical sites in the mitochondrial genome. Essential for embryonic development. This Mus musculus (Mouse) protein is Oligoribonuclease, mitochondrial (Rexo2).